A 477-amino-acid chain; its full sequence is Tyrosine--tRNA ligase, mitochondrial (477 aa).

The transit peptide at Met-1–Gly-16 directs the protein to the mitochondrion. Position 77 (Tyr-77) interacts with L-tyrosine. Residue Asp-81 participates in ATP binding. Positions Pro-82–His-91 match the 'HIGH' region motif. L-tyrosine-binding residues include Asp-121, Tyr-221, Gln-225, and Asp-228. Gly-244–Asp-246 lines the ATP pocket. Gln-247 contributes to the L-tyrosine binding site. Ile-274 and Lys-284 together coordinate ATP. A 'KMSKS' region motif is present at residues Lys-281–Ser-285. Lys-355 and Lys-367 each carry N6-acetyllysine.

The protein belongs to the class-I aminoacyl-tRNA synthetase family. In terms of assembly, homodimer.

The protein resides in the mitochondrion matrix. It catalyses the reaction tRNA(Tyr) + L-tyrosine + ATP = L-tyrosyl-tRNA(Tyr) + AMP + diphosphate + H(+). Its function is as follows. Catalyzes the attachment of tyrosine to tRNA(Tyr) in a two-step reaction: tyrosine is first activated by ATP to form Tyr-AMP and then transferred to the acceptor end of tRNA(Tyr). This is Tyrosine--tRNA ligase, mitochondrial (YARS2) from Homo sapiens (Human).